The following is a 441-amino-acid chain: Membrane protein PB1A10.07c (441 aa).

The next 11 helical transmembrane spans lie at 1–21, 41–61, 97–117, 128–148, 158–178, 206–226, 235–255, 263–283, 307–327, 364–384, and 415–435; these read MGAV…VVGI, VGAV…SWCM, LSFT…LCNT, GLWP…FFIP, IISV…LVDF, TVGM…FFCA, INTI…HPTI, GLAQ…SALA, VIGA…AASS, YNFI…ASLL, and IITS…PVFF.

This sequence belongs to the TDE1 family.

It localises to the membrane. The polypeptide is Membrane protein PB1A10.07c (Schizosaccharomyces pombe (strain 972 / ATCC 24843) (Fission yeast)).